The chain runs to 203 residues: MKLLHVDGSILGPHSVSRTVSAAIVDRLRAQHPDLDVAYRDLAQTPLPHLSGAVLAGAQPNATNAPDVQHDVDLGRQALDEFLAADVVVIGAPLYNFTLSSQLKAWIDRILVAGVTFRYGPSGAEGLAGGKRVIAVVSRGGLYGPGTPAAAAEHAETYLRTVLAFIGITAPEIIVAEGIALGPEARERALAGALDAAAALKAA.

FMN contacts are provided by residues S9, 15 to 17 (SVS), and 138 to 141 (SRGG).

Belongs to the azoreductase type 1 family. Homodimer. FMN serves as cofactor.

The catalysed reaction is 2 a quinone + NADH + H(+) = 2 a 1,4-benzosemiquinone + NAD(+). The enzyme catalyses N,N-dimethyl-1,4-phenylenediamine + anthranilate + 2 NAD(+) = 2-(4-dimethylaminophenyl)diazenylbenzoate + 2 NADH + 2 H(+). Quinone reductase that provides resistance to thiol-specific stress caused by electrophilic quinones. In terms of biological role, also exhibits azoreductase activity. Catalyzes the reductive cleavage of the azo bond in aromatic azo compounds to the corresponding amines. This chain is FMN-dependent NADH:quinone oxidoreductase, found in Methylorubrum populi (strain ATCC BAA-705 / NCIMB 13946 / BJ001) (Methylobacterium populi).